The sequence spans 258 residues: Alpha-fibrinogenase albofibrase (258 aa).

Residues 1–18 form the signal peptide; it reads MVLIRVLANLLILQLSYA. Positions 19–24 are excised as a propeptide; the sequence is QKSSEL. Residues 25-249 enclose the Peptidase S1 domain; that stretch reads VVGGDECNIN…YNDWIQSIIA (225 aa). 6 cysteine pairs are disulfide-bonded: cysteine 31–cysteine 163, cysteine 50–cysteine 66, cysteine 98–cysteine 256, cysteine 142–cysteine 210, cysteine 174–cysteine 189, and cysteine 200–cysteine 225. Asparagine 44 is a glycosylation site (N-linked (GlcNAc...) asparagine). Active-site charge relay system residues include histidine 65 and aspartate 110. Serine 204 (charge relay system) is an active-site residue.

The protein belongs to the peptidase S1 family. Snake venom subfamily. As to quaternary structure, monomer. Expressed by the venom gland.

It localises to the secreted. Its function is as follows. The recombinant protein has fibrinogenolytic activity against the Aalpha chain (FGA) of fibrinogen. Activates plasminogen (PLG) (is 4-fold less active than urokinase). Has weak thrombin-like enzyme activity. Has enzymatic activity against a trypsin-like substrate (S-3013) and shows a weaker activity on an activated protein C substrate (S-3125). The protein is Alpha-fibrinogenase albofibrase of Trimeresurus albolabris (White-lipped pit viper).